The primary structure comprises 689 residues: Small ribosomal subunit protein mS39 (689 aa).

Residues 1–37 constitute a mitochondrion transit peptide; sequence MAGVSAVRWLGLRSRLGQPLTGRRAGLCKQARSCRFY. An N6-acetyllysine modification is found at Lys-126. 10 PPR repeats span residues 149–183, 184–219, 255–289, 290–330, 331–367, 368–404, 412–446, 454–488, 489–523, and 572–606; these read IKDI…GTTV, SLET…EALE, NAHS…RLHA, DVYT…KVKP, NLQT…GIEP, SLAT…MGKR, DDKF…DNWK, RNFY…VYFP, HSQT…GHTF, and PATS…NKIP. A disordered region spans residues 665-689; the sequence is NLTALTSDSDTDSSSDSDSDTSEGK. Residues 673-689 are compositionally biased toward acidic residues; that stretch reads SDTDSSSDSDSDTSEGK.

The protein belongs to the mitochondrion-specific ribosomal protein mS39 family. In terms of assembly, component of the mitochondrial ribosome small subunit (28S) which comprises a 12S rRNA and about 30 distinct proteins. Associated with the 12S mitochondrial rRNA (12S mt-rRNA).

The protein localises to the mitochondrion. In terms of biological role, mitochondrial RNA-binding protein that has a role in mitochondrial translation. This is Small ribosomal subunit protein mS39 (PTCD3) from Pongo abelii (Sumatran orangutan).